The following is an 860-amino-acid chain: GPI ethanolamine phosphate transferase 2 (860 aa).

Residues N123 and N180 are each glycosylated (N-linked (GlcNAc...) asparagine). Helical transmembrane passes span L408–L428, L438–E458, E459–S479, F487–G506, N524–W544, L555–A575, W576–L596, and A639–V659. N-linked (GlcNAc...) asparagine glycosylation is present at N672. 4 consecutive transmembrane segments (helical) span residues L692–G712, F736–G756, V795–F815, and F834–V854.

It belongs to the PIGG/PIGN/PIGO family. PIGG subfamily.

The protein resides in the endoplasmic reticulum membrane. The protein operates within glycolipid biosynthesis; glycosylphosphatidylinositol-anchor biosynthesis. Its function is as follows. Ethanolamine phosphate transferase involved in glycosylphosphatidylinositol-anchor biosynthesis. Transfers ethanolamine phosphate to the GPI second mannose. This Yarrowia lipolytica (strain CLIB 122 / E 150) (Yeast) protein is GPI ethanolamine phosphate transferase 2 (LAS21).